Reading from the N-terminus, the 283-residue chain is Bifunctional protein FolD (283 aa).

Residues 166–168 (GRS) and Ser-191 contribute to the NADP(+) site.

This sequence belongs to the tetrahydrofolate dehydrogenase/cyclohydrolase family. Homodimer.

The enzyme catalyses (6R)-5,10-methylene-5,6,7,8-tetrahydrofolate + NADP(+) = (6R)-5,10-methenyltetrahydrofolate + NADPH. It catalyses the reaction (6R)-5,10-methenyltetrahydrofolate + H2O = (6R)-10-formyltetrahydrofolate + H(+). It participates in one-carbon metabolism; tetrahydrofolate interconversion. In terms of biological role, catalyzes the oxidation of 5,10-methylenetetrahydrofolate to 5,10-methenyltetrahydrofolate and then the hydrolysis of 5,10-methenyltetrahydrofolate to 10-formyltetrahydrofolate. This Pediococcus pentosaceus (strain ATCC 25745 / CCUG 21536 / LMG 10740 / 183-1w) protein is Bifunctional protein FolD.